A 585-amino-acid chain; its full sequence is Membrane protein insertase YidC (585 aa).

Helical transmembrane passes span 5 to 25 (SVTG…FMSP), 338 to 358 (FGWD…AFTW), 362 to 382 (FVSN…LVTY), 432 to 452 (LGGC…FYVF), 482 to 502 (IPMY…TVFL), and 518 to 538 (IMLY…PSGL).

The protein belongs to the OXA1/ALB3/YidC family. Type 1 subfamily. Interacts with the Sec translocase complex via SecD. Specifically interacts with transmembrane segments of nascent integral membrane proteins during membrane integration.

Its subcellular location is the cell inner membrane. Functionally, required for the insertion and/or proper folding and/or complex formation of integral membrane proteins into the membrane. Involved in integration of membrane proteins that insert both dependently and independently of the Sec translocase complex, as well as at least some lipoproteins. Aids folding of multispanning membrane proteins. This is Membrane protein insertase YidC from Chlorobium luteolum (strain DSM 273 / BCRC 81028 / 2530) (Pelodictyon luteolum).